The chain runs to 313 residues: Acetaldehyde dehydrogenase 3 (313 aa).

13 to 16 (SGNI) is a binding site for NAD(+). Catalysis depends on C133, which acts as the Acyl-thioester intermediate. NAD(+) is bound by residues 164–172 (SAGPGTRAN) and N291.

This sequence belongs to the acetaldehyde dehydrogenase family.

It catalyses the reaction acetaldehyde + NAD(+) + CoA = acetyl-CoA + NADH + H(+). This is Acetaldehyde dehydrogenase 3 from Paraburkholderia xenovorans (strain LB400).